We begin with the raw amino-acid sequence, 1073 residues long: Carbamoyl phosphate synthase large chain (1073 aa).

The interval 2–403 (PKRTDIKSIL…SVQKALRGLE (402 aa)) is carboxyphosphate synthetic domain. Arg-129, Arg-169, Gly-175, Gly-176, Glu-208, Leu-210, Glu-215, Gly-241, Val-242, His-243, Gln-285, and Glu-299 together coordinate ATP. Positions 133 to 328 (DKAMKDIGLA…IAKIAAKLAV (196 aa)) constitute an ATP-grasp 1 domain. Positions 285, 299, and 301 each coordinate Mg(2+). 3 residues coordinate Mn(2+): Gln-285, Glu-299, and Asn-301. The interval 404-553 (VGATGFDPKL…YSTYEEECEA (150 aa)) is oligomerization domain. A carbamoyl phosphate synthetic domain region spans residues 554–935 (NPSSREKIMI…AFAKAQLGAS (382 aa)). The ATP-grasp 2 domain maps to 678–869 (QQMVQRLNLR…LAKVAARVMA (192 aa)). ATP is bound by residues Arg-714, His-753, Leu-755, Glu-760, Gly-785, Val-786, His-787, Ser-788, Gln-828, and Glu-840. Residues Gln-828, Glu-840, and Asn-842 each contribute to the Mg(2+) site. Positions 828, 840, and 842 each coordinate Mn(2+). In terms of domain architecture, MGS-like spans 936–1073 (EILPTAGCAF…LQDLHAGIKA (138 aa)). The tract at residues 936 to 1073 (EILPTAGCAF…LQDLHAGIKA (138 aa)) is allosteric domain.

It belongs to the CarB family. As to quaternary structure, composed of two chains; the small (or glutamine) chain promotes the hydrolysis of glutamine to ammonia, which is used by the large (or ammonia) chain to synthesize carbamoyl phosphate. Tetramer of heterodimers (alpha,beta)4. It depends on Mg(2+) as a cofactor. Mn(2+) serves as cofactor.

The catalysed reaction is hydrogencarbonate + L-glutamine + 2 ATP + H2O = carbamoyl phosphate + L-glutamate + 2 ADP + phosphate + 2 H(+). It catalyses the reaction hydrogencarbonate + NH4(+) + 2 ATP = carbamoyl phosphate + 2 ADP + phosphate + 2 H(+). The protein operates within amino-acid biosynthesis; L-arginine biosynthesis; carbamoyl phosphate from bicarbonate: step 1/1. It functions in the pathway pyrimidine metabolism; UMP biosynthesis via de novo pathway; (S)-dihydroorotate from bicarbonate: step 1/3. Large subunit of the glutamine-dependent carbamoyl phosphate synthetase (CPSase). CPSase catalyzes the formation of carbamoyl phosphate from the ammonia moiety of glutamine, carbonate, and phosphate donated by ATP, constituting the first step of 2 biosynthetic pathways, one leading to arginine and/or urea and the other to pyrimidine nucleotides. The large subunit (synthetase) binds the substrates ammonia (free or transferred from glutamine from the small subunit), hydrogencarbonate and ATP and carries out an ATP-coupled ligase reaction, activating hydrogencarbonate by forming carboxy phosphate which reacts with ammonia to form carbamoyl phosphate. The polypeptide is Carbamoyl phosphate synthase large chain (Pseudomonas aeruginosa (strain ATCC 15692 / DSM 22644 / CIP 104116 / JCM 14847 / LMG 12228 / 1C / PRS 101 / PAO1)).